Reading from the N-terminus, the 584-residue chain is Aspartate--tRNA(Asp/Asn) ligase (584 aa).

E177 provides a ligand contact to L-aspartate. The aspartate stretch occupies residues 201–204 (QLFK). An L-aspartate-binding site is contributed by R223. ATP is bound by residues 223–225 (RDE) and Q232. An L-aspartate-binding site is contributed by H447. E481 contacts ATP. R488 lines the L-aspartate pocket. Position 533–536 (533–536 (GLDR)) interacts with ATP.

This sequence belongs to the class-II aminoacyl-tRNA synthetase family. Type 1 subfamily. Homodimer.

It is found in the cytoplasm. The enzyme catalyses tRNA(Asx) + L-aspartate + ATP = L-aspartyl-tRNA(Asx) + AMP + diphosphate. In terms of biological role, aspartyl-tRNA synthetase with relaxed tRNA specificity since it is able to aspartylate not only its cognate tRNA(Asp) but also tRNA(Asn). Reaction proceeds in two steps: L-aspartate is first activated by ATP to form Asp-AMP and then transferred to the acceptor end of tRNA(Asp/Asn). This Chlamydia abortus (strain DSM 27085 / S26/3) (Chlamydophila abortus) protein is Aspartate--tRNA(Asp/Asn) ligase.